A 250-amino-acid chain; its full sequence is tRNA (guanine-N(1)-)-methyltransferase (250 aa).

S-adenosyl-L-methionine-binding positions include G116 and 136-141 (IGDYVL).

The protein belongs to the RNA methyltransferase TrmD family. As to quaternary structure, homodimer.

Its subcellular location is the cytoplasm. It catalyses the reaction guanosine(37) in tRNA + S-adenosyl-L-methionine = N(1)-methylguanosine(37) in tRNA + S-adenosyl-L-homocysteine + H(+). Specifically methylates guanosine-37 in various tRNAs. This Pseudomonas savastanoi pv. phaseolicola (strain 1448A / Race 6) (Pseudomonas syringae pv. phaseolicola (strain 1448A / Race 6)) protein is tRNA (guanine-N(1)-)-methyltransferase.